Reading from the N-terminus, the 693-residue chain is Transcription activator of gluconeogenesis BC1G_14637 (693 aa).

A compositionally biased stretch (acidic residues) spans Met1–Val12. Residues Met1–Pro75 are disordered. Positions Tyr21–Gly49 are enriched in basic and acidic residues. The span at Asn52 to Val62 shows a compositional bias: polar residues. Residues Pro65 to Arg74 show a composition bias toward basic and acidic residues. A DNA-binding region (zn(2)-C6 fungal-type) is located at residues Cys84–Cys112. 2 stretches are compositionally biased toward polar residues: residues Ser144 to Thr155 and Ser275 to Met287. 4 disordered regions span residues Ser144–Thr170, Ser273–Asn299, Thr350–Asp413, and Asn531–Pro567. Low complexity predominate over residues Ser356–Thr367. Polar residues predominate over residues Gly369–Tyr379. Residues Lys394 to Gly408 show a composition bias toward low complexity.

This sequence belongs to the ERT1/acuK family.

Its subcellular location is the nucleus. Its function is as follows. Transcription factor which regulates nonfermentable carbon utilization. Activator of gluconeogenetic genes. This is Transcription activator of gluconeogenesis BC1G_14637 from Botryotinia fuckeliana (strain B05.10) (Noble rot fungus).